We begin with the raw amino-acid sequence, 126 residues long: Class I hydrophobin 1 (126 aa).

The signal sequence occupies residues Met1 to Ala16. Intrachain disulfides connect Cys38–Cys100, Cys46–Cys94, Cys47–Cys75, and Cys101–Cys119.

The protein belongs to the fungal hydrophobin family.

The protein resides in the secreted. Its subcellular location is the cell wall. Aerial growth, conidiation, and dispersal of filamentous fungi in the environment rely upon a capability of their secreting small amphipathic proteins called hydrophobins (HPBs) with low sequence identity. Class I can self-assemble into an outermost layer of rodlet bundles on aerial cell surfaces, conferring cellular hydrophobicity that supports fungal growth, development and dispersal; whereas Class II form highly ordered films at water-air interfaces through intermolecular interactions but contribute nothing to the rodlet structure. HYD1 and HYD2 are required for the structural integrity of the long aerial chains of microconidia. Does not seem to be important for the ability to cause seedling disease. The polypeptide is Class I hydrophobin 1 (Gibberella moniliformis (Maize ear and stalk rot fungus)).